Reading from the N-terminus, the 763-residue chain is Palmitoyltransferase AKR1 (763 aa).

The span at 1-15 (MEDNSEQASVSSQAS) shows a compositional bias: polar residues. Residues 1-59 (MEDNSEQASVSSQASMRPLVSDNGDREAGAGVEVNIANDNDTSVGVDGENGNEDDDPIL) are disordered. The Cytoplasmic portion of the chain corresponds to 1 to 307 (MEDNSEQASV…KLVKRDDHAK (307 aa)). ANK repeat units follow at residues 57-87 (PILS…NVSS), 92-121 (EGVT…NVES), 126-155 (LEAT…SATT), 159-188 (QGFN…SKGI), 197-226 (KGRT…SVKI), 230-259 (GGFT…DFFQ), and 292-322 (NGYP…GFAF). A helical membrane pass occupies residues 308 to 325 (IITFLIPLLVLGFAFFGF). Over 326-330 (SHLHI) the chain is Lumenal. The chain crosses the membrane as a helical span at residues 331 to 348 (LFALPVIILLLLASNKFI). The Cytoplasmic portion of the chain corresponds to 349–368 (KSFLLPSYETKGTNSASLLK). A helical membrane pass occupies residues 369–389 (SPLIAGILFGSIFWLAFVWIL). Over 390-401 (RILPYTFTKRPL) the chain is Lumenal. The helical transmembrane segment at 402–422 (GNLTFCAILCFVCYSLFLLAF) threads the bilayer. The Cytoplasmic portion of the chain corresponds to 423 to 497 (SDPGHIGSEN…YNDVGLKNHK (75 aa)). The DHHC domain maps to 454 to 504 (SFCLETWVRKPLRSKYSYLNDALILRFDHYCPWIYNDVGLKNHKLFIFFIL). Cys-484 serves as the catalytic S-palmitoyl cysteine intermediate. A helical membrane pass occupies residues 498–518 (LFIFFILALELGIFSFVKVCL). Topologically, residues 519–546 (KYFDELDMDGDCFILGDDDLCSGLIGDR) are lumenal. A helical transmembrane segment spans residues 547–567 (FTFLIMTWACIQAVWIFSLVI). The Cytoplasmic portion of the chain corresponds to 568–763 (VQLFQITKGL…DPLSEIDDMV (196 aa)).

It belongs to the DHHC palmitoyltransferase family. AKR/ZDHHC17 subfamily.

Its subcellular location is the early endosome membrane. The protein resides in the golgi apparatus membrane. It carries out the reaction L-cysteinyl-[protein] + hexadecanoyl-CoA = S-hexadecanoyl-L-cysteinyl-[protein] + CoA. In terms of biological role, palmitoyltransferase specific for casein kinase 1. This Candida glabrata (strain ATCC 2001 / BCRC 20586 / JCM 3761 / NBRC 0622 / NRRL Y-65 / CBS 138) (Yeast) protein is Palmitoyltransferase AKR1 (AKR1).